The sequence spans 402 residues: S-adenosylmethionine synthase (402 aa).

140-145 contacts ATP; sequence GNGSID.

It belongs to the AdoMet synthase 2 family. Requires Mg(2+) as cofactor.

The enzyme catalyses L-methionine + ATP + H2O = S-adenosyl-L-methionine + phosphate + diphosphate. It participates in amino-acid biosynthesis; S-adenosyl-L-methionine biosynthesis; S-adenosyl-L-methionine from L-methionine: step 1/1. Functionally, catalyzes the formation of S-adenosylmethionine from methionine and ATP. This Picrophilus torridus (strain ATCC 700027 / DSM 9790 / JCM 10055 / NBRC 100828 / KAW 2/3) protein is S-adenosylmethionine synthase.